A 214-amino-acid chain; its full sequence is Nigrelysin (214 aa).

Residues 1 to 21 form the signal peptide; sequence MKNRLVIIVFMVVTMLCASLA. Positions 22 to 35 are excised as a propeptide; it reads LPLEEKEDEKDEKR. Residues 38 to 47 form a plays an important role in the hemolytic activity region; the sequence is EVAGAVMEGA. Positions 46-65 are N-terminal region; that stretch reads GANLGMSVLQTILQAIGDVS. The phosphocholine site is built by Ser-89, Val-122, Ser-140, Pro-142, Tyr-168, Tyr-172, and Tyr-173. Residues 140–155 are trp-rich region, which is important for the binding to lipid membrane; sequence SVPYDYNWYSNWWNVK. Residues 179–181 carry the Cell attachment site, crucial for protein stability motif; it reads KGD.

It belongs to the actinoporin family. Sea anemone subfamily. Octamer or nonamer in membranes. Monomer in the soluble state.

The protein resides in the secreted. It localises to the nematocyst. It is found in the target cell membrane. Pore-forming protein that forms cation-selective hydrophilic pores in cell membranes and causes cytolysis. Pore formation is a multi-step process that involves specific recognition of membrane sphingomyelin (but neither cholesterol nor phosphatidylcholine) using aromatic rich region and adjacent phosphocholine (POC) binding site, firm binding to the membrane (mainly driven by hydrophobic interactions) accompanied by the transfer of the N-terminal region to the lipid-water interface and finally pore formation after oligomerization of monomers. This protein shows potent hemolytic activity (EC(50)=0.09 nM), as well as potent cytotoxic activity on nucleated cells (L1210 cells). The cytotoxic process starts with cellular swelling that is time and dose dependent and occurs up to a critical volume, probably due to influx of water via pores opened by this actinoporin. The second phase consists of the final loss of membrane integrity that leads to cytolysis. The sequence is that of Nigrelysin from Anthopleura nigrescens (Sea anemone).